The primary structure comprises 289 residues: Oxaloacetate decarboxylase 1 (289 aa).

Ser50 serves as a coordination point for substrate. Asp88 contributes to the Mg(2+) binding site. Positions 159 and 235 each coordinate substrate.

Belongs to the isocitrate lyase/PEP mutase superfamily. Oxaloacetate decarboxylase family. As to quaternary structure, homotetramer; dimer of dimers. The cofactor is Mg(2+).

The enzyme catalyses oxaloacetate + H(+) = pyruvate + CO2. Functionally, catalyzes the decarboxylation of oxaloacetate into pyruvate. Seems to play a role in maintaining cellular concentrations of bicarbonate and pyruvate. The sequence is that of Oxaloacetate decarboxylase 1 from Pseudomonas fluorescens (strain Pf0-1).